The sequence spans 151 residues: Cysteine proteinase inhibitor 10 (151 aa).

The signal sequence occupies residues 1 to 22 (MATSPMLFLVSLLLVLVAAATG). Positions 40–109 (GGRTEIRDVG…GVAYYLKVAA (70 aa)) constitute a Cystatin domain. Residues 96–100 (QVVSG) carry the Secondary area of contact motif.

Belongs to the cystatin family. Phytocystatin subfamily.

The protein localises to the secreted. Its function is as follows. Specific inhibitor of cysteine proteinases. Probably involved in the regulation of endogenous processes and in defense against pests and pathogens. This is Cysteine proteinase inhibitor 10 from Oryza sativa subsp. indica (Rice).